Reading from the N-terminus, the 212-residue chain is Interleukin-6 (212 aa).

Residues 1-27 (MNSFSTSAFGPVAFSLGLLLVLPAAFP) form the signal peptide. A disulfide bridge connects residues cysteine 72 and cysteine 78. Asparagine 73 is a glycosylation site (N-linked (GlcNAc...) asparagine). Serine 81 carries the phosphoserine modification. Cysteine 101 and cysteine 111 form a disulfide bridge. Asparagine 172 carries N-linked (GlcNAc...) asparagine glycosylation.

It belongs to the IL-6 superfamily. As to quaternary structure, component of a hexamer of two molecules each of IL6, IL6R and IL6ST; first binds to IL6R to associate with the signaling subunit IL6ST. Interacts with IL6R (via the N-terminal ectodomain); this interaction may be affected by IL6R-binding with SORL1, hence decreasing IL6 cis signaling. Interacts with SORL1 (via the N-terminal ectodomain); this interaction leads to IL6 internalization and lysosomal degradation. May form a trimeric complex with the soluble SORL1 ectodomain and soluble IL6R receptor; this interaction might stabilize circulating IL6, hence promoting IL6 trans signaling.

It is found in the secreted. Functionally, cytokine with a wide variety of biological functions in immunity, tissue regeneration, and metabolism. Binds to IL6R, then the complex associates to the signaling subunit IL6ST/gp130 to trigger the intracellular IL6-signaling pathway. The interaction with the membrane-bound IL6R and IL6ST stimulates 'classic signaling', whereas the binding of IL6 and soluble IL6R to IL6ST stimulates 'trans-signaling'. Alternatively, 'cluster signaling' occurs when membrane-bound IL6:IL6R complexes on transmitter cells activate IL6ST receptors on neighboring receiver cells. In terms of biological role, IL6 is a potent inducer of the acute phase response. Rapid production of IL6 contributes to host defense during infection and tissue injury, but excessive IL6 synthesis is involved in disease pathology. In the innate immune response, is synthesized by myeloid cells, such as macrophages and dendritic cells, upon recognition of pathogens through toll-like receptors (TLRs) at the site of infection or tissue injury. In the adaptive immune response, is required for the differentiation of B cells into immunoglobulin-secreting cells. Plays a major role in the differentiation of CD4(+) T cell subsets. Essential factor for the development of T follicular helper (Tfh) cells that are required for the induction of germinal-center formation. Required to drive naive CD4(+) T cells to the Th17 lineage. Also required for proliferation of myeloma cells and the survival of plasmablast cells. Its function is as follows. Acts as an essential factor in bone homeostasis and on vessels directly or indirectly by induction of VEGF, resulting in increased angiogenesis activity and vascular permeability. Induces, through 'trans-signaling' and synergistically with IL1B and TNF, the production of VEGF. Involved in metabolic controls, is discharged into the bloodstream after muscle contraction increasing lipolysis and improving insulin resistance. 'Trans-signaling' in central nervous system also regulates energy and glucose homeostasis. Mediates, through GLP-1, crosstalk between insulin-sensitive tissues, intestinal L cells and pancreatic islets to adapt to changes in insulin demand. Also acts as a myokine. Plays a protective role during liver injury, being required for maintenance of tissue regeneration. Also has a pivotal role in iron metabolism by regulating HAMP/hepcidin expression upon inflammation or bacterial infection. Through activation of IL6ST-YAP-NOTCH pathway, induces inflammation-induced epithelial regeneration. The sequence is that of Interleukin-6 (IL6) from Macaca mulatta (Rhesus macaque).